The chain runs to 228 residues: Tol-Pal system protein TolQ (228 aa).

The next 3 helical transmembrane spans lie at 16-36, 137-157, and 172-192; these read IVVQLVIVILISFSIISWAII, VSPYIGLFGTVWGIMHAFMAL, and IAEALIATAIGLFAAIPAVMA.

It belongs to the ExbB/TolQ family. As to quaternary structure, the Tol-Pal system is composed of five core proteins: the inner membrane proteins TolA, TolQ and TolR, the periplasmic protein TolB and the outer membrane protein Pal. They form a network linking the inner and outer membranes and the peptidoglycan layer.

Its subcellular location is the cell inner membrane. Its function is as follows. Part of the Tol-Pal system, which plays a role in outer membrane invagination during cell division and is important for maintaining outer membrane integrity. In Haemophilus influenzae (strain ATCC 51907 / DSM 11121 / KW20 / Rd), this protein is Tol-Pal system protein TolQ.